We begin with the raw amino-acid sequence, 469 residues long: GTPase Der (469 aa).

2 EngA-type G domains span residues 3-166 (PVIA…PEDE) and 177-350 (LRLA…ESAN). GTP-binding positions include 9-16 (GRPNVGKS), 56-60 (DTGGI), 118-121 (NKVD), 183-190 (GRPNVGKS), 230-234 (DTAGV), and 295-298 (NKWD). One can recognise a KH-like domain in the interval 351–435 (LKVSPAKLTQ…PVKIEFKTSE (85 aa)).

Belongs to the TRAFAC class TrmE-Era-EngA-EngB-Septin-like GTPase superfamily. EngA (Der) GTPase family. As to quaternary structure, associates with the 50S ribosomal subunit.

Its function is as follows. GTPase that plays an essential role in the late steps of ribosome biogenesis. The chain is GTPase Der from Acinetobacter baumannii (strain AB0057).